The sequence spans 122 residues: MIQPQTYLNVADNSGARKLMCIQILGASNRKYAHIGDIIIAVVKEAIPNMPLKKSEVVRAVVVRTCKELKRKNGTIIQFDDNAAVIINQEGNPKGTRVFGPVARELRESNFTKIVSLAPEVL.

This sequence belongs to the universal ribosomal protein uL14 family. In terms of assembly, part of the 50S ribosomal subunit.

The protein resides in the plastid. The protein localises to the chloroplast. In terms of biological role, binds to 23S rRNA. This chain is Large ribosomal subunit protein uL14c, found in Physcomitrium patens (Spreading-leaved earth moss).